Reading from the N-terminus, the 356-residue chain is DNA polymerase IV (356 aa).

A UmuC domain is found at 1–188 (MDTSRKIIHI…IPVTKFYGVG (188 aa)). Mg(2+)-binding residues include Asp11 and Asp106. Glu107 is a catalytic residue.

Belongs to the DNA polymerase type-Y family. Monomer. It depends on Mg(2+) as a cofactor.

It localises to the cytoplasm. The catalysed reaction is DNA(n) + a 2'-deoxyribonucleoside 5'-triphosphate = DNA(n+1) + diphosphate. Poorly processive, error-prone DNA polymerase involved in untargeted mutagenesis. Copies undamaged DNA at stalled replication forks, which arise in vivo from mismatched or misaligned primer ends. These misaligned primers can be extended by PolIV. Exhibits no 3'-5' exonuclease (proofreading) activity. May be involved in translesional synthesis, in conjunction with the beta clamp from PolIII. This chain is DNA polymerase IV, found in Listeria monocytogenes serovar 1/2a (strain ATCC BAA-679 / EGD-e).